The chain runs to 99 residues: Large ribosomal subunit protein bL28 (99 aa).

This sequence belongs to the bacterial ribosomal protein bL28 family.

In Rhizobium etli (strain CIAT 652), this protein is Large ribosomal subunit protein bL28.